Consider the following 55-residue polypeptide: Large ribosomal subunit protein bL32 (55 aa).

Residues 1–27 are disordered; that stretch reads MAVQQNKPTRSKRGMRRSHDALTTATL.

It belongs to the bacterial ribosomal protein bL32 family.

This chain is Large ribosomal subunit protein bL32, found in Yersinia enterocolitica serotype O:8 / biotype 1B (strain NCTC 13174 / 8081).